Reading from the N-terminus, the 206-residue chain is Protein GrpE (206 aa).

Positions 1–17 are enriched in basic and acidic residues; it reads MSNESIKAEQDLIHEGV. The tract at residues 1 to 20 is disordered; the sequence is MSNESIKAEQDLIHEGVESE.

It belongs to the GrpE family. Homodimer.

The protein localises to the cytoplasm. Participates actively in the response to hyperosmotic and heat shock by preventing the aggregation of stress-denatured proteins, in association with DnaK and GrpE. It is the nucleotide exchange factor for DnaK and may function as a thermosensor. Unfolded proteins bind initially to DnaJ; upon interaction with the DnaJ-bound protein, DnaK hydrolyzes its bound ATP, resulting in the formation of a stable complex. GrpE releases ADP from DnaK; ATP binding to DnaK triggers the release of the substrate protein, thus completing the reaction cycle. Several rounds of ATP-dependent interactions between DnaJ, DnaK and GrpE are required for fully efficient folding. The sequence is that of Protein GrpE from Shewanella oneidensis (strain ATCC 700550 / JCM 31522 / CIP 106686 / LMG 19005 / NCIMB 14063 / MR-1).